The following is a 425-amino-acid chain: MASSNLIKQLQERGLIAQVTDEGALAERLAQGPIALYCGFDPTADSLHLGHLVPLLCLKRFQLAGHKPVALVGGATGLIGDPSFKATERKLNTADTVGEWVEKIRRQVSPFLDFDCGKNSAIAANNYDWFGGMNVLDFLRDIGKHFSVNQMINKEAVKQRLNRDDVGISFTEFSYNLLQGYDFASLNKQHDVELQIGGSDQWGNITSGIDLTRRMNQKQVYGLTVPLITKSDGTKFGKTEGGAIWLDASKTSPYKFYQFWINTADADVYRFLKFFTFMSLEDIDALEEEDKNSGKAPRAQYVLAEEVTRMVHGEAGLEAARRITQSLFSGALQDMTQDDFAQLAQDGMPIIELENGADLQQALVSAELVPSRGQARTMISSNAVTINGEKQADPEYTFSASDRLFDRYTLLRRGKKHYCLICWKA.

Residue Y37 participates in L-tyrosine binding. The 'HIGH' region motif lies at 42–51 (PTADSLHLGH). The L-tyrosine site is built by Y175 and Q179. The 'KMSKS' region signature appears at 235-239 (KFGKT). K238 contacts ATP. The S4 RNA-binding domain occupies 357 to 414 (ADLQQALVSAELVPSRGQARTMISSNAVTINGEKQADPEYTFSASDRLFDRYTLLRRG).

Belongs to the class-I aminoacyl-tRNA synthetase family. TyrS type 1 subfamily. As to quaternary structure, homodimer.

It is found in the cytoplasm. The catalysed reaction is tRNA(Tyr) + L-tyrosine + ATP = L-tyrosyl-tRNA(Tyr) + AMP + diphosphate + H(+). Its function is as follows. Catalyzes the attachment of tyrosine to tRNA(Tyr) in a two-step reaction: tyrosine is first activated by ATP to form Tyr-AMP and then transferred to the acceptor end of tRNA(Tyr). The chain is Tyrosine--tRNA ligase from Pectobacterium carotovorum subsp. carotovorum (strain PC1).